Consider the following 1190-residue polypeptide: Phosphatidylinositol-3,5-bisphosphate 3-phosphatase MTMR4 (1190 aa).

At S8 the chain carries Phosphoserine. Positions 153-570 constitute a Myotubularin phosphatase domain; the sequence is EHIRCRQEAE…RALHLWTAVY (418 aa). A 1,2-diacyl-sn-glycero-3-phospho-(1D-myo-inositol-3,5-bisphosphate) contacts are provided by N320, N345, and I346. Residues N320, N345, and I346 each contribute to the a 1,2-diacyl-sn-glycero-3-phospho-(1D-myo-inositol-3-phosphate) site. The active-site Phosphocysteine intermediate is the C407. A 1,2-diacyl-sn-glycero-3-phospho-(1D-myo-inositol-3,5-bisphosphate)-binding residues include S408, D409, G410, W411, D412, R413, K449, and R453. A 1,2-diacyl-sn-glycero-3-phospho-(1D-myo-inositol-3-phosphate) is bound by residues S408, D409, G410, W411, D412, and R413. Residue R453 coordinates a 1,2-diacyl-sn-glycero-3-phospho-(1D-myo-inositol-3-phosphate). Phosphoserine is present on residues S610 and S629. 3 disordered regions span residues 616–694, 724–749, and 773–848; these read SACD…FKGH, ETEA…GKPP, and DFPE…PSSV. Positions 618 to 637 are enriched in polar residues; the sequence is CDTSSPLTRTSSDPNLNNHS. The segment covering 782-847 has biased composition (polar residues); sequence LTGTPQQPHL…SISHQEQPSS (66 aa). Residues 999 to 1003 carry the PY-motif; substrate motif for NEDD4 motif; that stretch reads VPPLY. The stretch at 1020–1052 forms a coiled coil; that stretch reads LRQIEAGYRQEVEQLRRQVRELQMRLDIRHCCA. The segment at 1109-1169 adopts an FYVE-type zinc-finger fold; sequence DHMASHCFNC…VCNSCYEHIQ (61 aa). C1115, C1118, C1131, C1134, C1139, C1142, C1161, and C1164 together coordinate Zn(2+).

The protein belongs to the protein-tyrosine phosphatase family. Non-receptor class myotubularin subfamily. As to quaternary structure, homooligomeric. Forms MTMR3:MTMR4 heterooligomers; regulates the localization of both proteins. The MTMR3:MTMR4 heterooligomer can also recruit both CEP55 and PLK1; occurs during early mitosis, regulates the phosphorylation of CEP55 by PLK1 and its recruitment to the midbody where it can mediate cell abscission. Interacts with SMAD2 and SMAD3; negatively regulates TGF-beta signaling through SMAD2 and SMAD3 dephosphorylation and retention in endosomes. Interacts with SMAD1; negatively regulates BMP signaling through SMAD1 dephosphorylation and retention in endosomes. Ubiquitinated. Ubiquitination by NEDD4 probably leads to proteasomal degradation. Post-translationally, phosphorylated by CDK1 during mitosis.

It is found in the early endosome membrane. Its subcellular location is the recycling endosome membrane. The protein localises to the late endosome membrane. It localises to the cytoplasmic vesicle. The protein resides in the phagosome membrane. It catalyses the reaction a 1,2-diacyl-sn-glycero-3-phospho-(1D-myo-inositol-3-phosphate) + H2O = a 1,2-diacyl-sn-glycero-3-phospho-(1D-myo-inositol) + phosphate. The enzyme catalyses a 1,2-diacyl-sn-glycero-3-phospho-(1D-myo-inositol-3,5-bisphosphate) + H2O = a 1,2-diacyl-sn-glycero-3-phospho-(1D-myo-inositol-5-phosphate) + phosphate. The catalysed reaction is 1,2-dioctanoyl-sn-glycero-3-phospho-(1-D-myo-inositol-3-phosphate) + H2O = 1,2-dioctanoyl-sn-glycero-3-phospho-(1D-myo-inositol) + phosphate. It carries out the reaction 1,2-dioctanoyl-sn-glycero-3-phospho-(1D-myo-inositol-3,5-bisphosphate) + H2O = 1,2-dioctanoyl-sn-glycero-3-phospho-(1D-myo-inositol-5-phosphate) + phosphate. In terms of biological role, lipid phosphatase that specifically dephosphorylates the D-3 position of phosphatidylinositol 3-phosphate and phosphatidylinositol 3,5-bisphosphate, generating phosphatidylinositol and phosphatidylinositol 5-phosphate. Decreases the levels of phosphatidylinositol 3-phosphate, a phospholipid found in cell membranes where it acts as key regulator of both cell signaling and intracellular membrane traffic, in a subset of endosomal membranes to negatively regulate both endocytic recycling and trafficking and/or maturation of endosomes toward lysosomes. Through phosphatidylinositol 3-phosphate turnover in phagosome membranes regulates phagocytosis and phagosome maturation. By decreasing phosphatidylinositol 3-monophosphate (PI3P) levels in immune cells it can also regulate the innate immune response. Beside its lipid phosphatase activity, can also function as a molecular adapter to regulate midbody abscission during mitotic cytokinesis. Can also negatively regulate TGF-beta and BMP signaling through Smad proteins dephosphorylation and retention in endosomes. The sequence is that of Phosphatidylinositol-3,5-bisphosphate 3-phosphatase MTMR4 from Mus musculus (Mouse).